Consider the following 31-residue polypeptide: Photosystem I reaction center subunit XII (31 aa).

Residues 7–26 (QVFLALIIALIPGILADRLG) traverse the membrane as a helical segment.

It belongs to the PsaM family.

The protein localises to the plastid. It localises to the chloroplast thylakoid membrane. This Euglena deses protein is Photosystem I reaction center subunit XII.